We begin with the raw amino-acid sequence, 179 residues long: uncharacterized protein (179 aa).

The or 24 signal peptide spans 1-27 (MKTISKQLSAVIFPFIFSACVSQSASS).

This is an uncharacterized protein from Haemophilus influenzae (strain ATCC 51907 / DSM 11121 / KW20 / Rd).